Here is a 295-residue protein sequence, read N- to C-terminus: G1/S-specific cyclin-D1 (295 aa).

One can recognise a Cyclin N-terminal domain in the interval 28–152; the sequence is LRAMLKTEET…LLVNKLKWNL (125 aa). The tract at residues 262 to 283 is disordered; it reads AQQNVDPKATEEEGEVEEEAGL. K269 is covalently cross-linked (Glycyl lysine isopeptide (Lys-Gly) (interchain with G-Cter in ubiquitin)). A Phosphothreonine modification is found at T286.

This sequence belongs to the cyclin family. Cyclin D subfamily. As to quaternary structure, interacts with either CDK4 or CDK6 protein kinase to form a serine/threonine kinase holoenzyme complex. The cyclin subunit imparts substrate specificity to the complex. Component of the ternary complex CCND1/CDK4/CDKN1B required for nuclear translocation and modulation of CDK4-mediated kinase activity. Interacts directly with CDKN1B. Can form similar complexes with either CDKN1A or CDKN2A. Interacts with UHRF2; the interaction ubiquitinates CCND1 and appears to occur independently of phosphorylation. Interacts with USP2. Interacts (via cyclin N-terminal domain) with INSM1 (via N-terminal region); the interaction competes with the binding of CCND1 to CDK4 during cell cycle progression and inhibits CDK4 activity. Interacts with CDK4; the interaction is prevented with the binding of CCND1 to INSM1 during cell cycle progression. Phosphorylation at Thr-286 by MAP kinases is required for ubiquitination and degradation by the DCX(AMBRA1) complex. It also plays an essential role for recognition by the FBXO31 component of SCF (SKP1-cullin-F-box) protein ligase complex following DNA damage. Post-translationally, ubiquitinated at Lys-269 by the DCX(AMBRA1) complex during the transition from G1 to S cell phase, leading to its degradation: ubiquitination is dependent on Thr-286 phosphorylation. The DCX(AMBRA1) complex represents the major regulator of CCND1 stability during the G1/S transition. Also ubiquitinated by the SCF(FBXO4) and Cul7-RING(FBXW8) ubiquitin-protein ligase complexes. Following DNA damage it is ubiquitinated by the SCF(FBXO31) protein ligase complex. SCF(FBXO31) ubiquitination is dependent on Thr-286 phosphorylation. Ubiquitinated also by UHRF2 apparently in a phosphorylation-independent manner. Ubiquitination leads to its degradation and G1 arrest. Deubiquitinated by USP2; leading to its stabilization. As to expression, expressed in the intestinal epithelium.

The protein localises to the nucleus. The protein resides in the cytoplasm. Its subcellular location is the nucleus membrane. In terms of biological role, regulatory component of the cyclin D1-CDK4 (DC) complex that phosphorylates and inhibits members of the retinoblastoma (RB) protein family including RB1 and regulates the cell-cycle during G(1)/S transition. Phosphorylation of RB1 allows dissociation of the transcription factor E2F from the RB/E2F complex and the subsequent transcription of E2F target genes which are responsible for the progression through the G(1) phase. Hypophosphorylates RB1 in early G(1) phase. Cyclin D-CDK4 complexes are major integrators of various mitogenenic and antimitogenic signals. Also a substrate for SMAD3, phosphorylating SMAD3 in a cell-cycle-dependent manner and repressing its transcriptional activity. Component of the ternary complex, cyclin D1/CDK4/CDKN1B, required for nuclear translocation and activity of the cyclin D-CDK4 complex. Exhibits transcriptional corepressor activity with INSM1 on the NEUROD1 and INS promoters in a cell cycle-independent manner. This chain is G1/S-specific cyclin-D1 (Ccnd1), found in Mus musculus (Mouse).